Reading from the N-terminus, the 132-residue chain is MVNDTVANMITSIRNANVIEATTVRIPATNTTKDVGKILLQEGFITNLREHKENTRSFLILTLKYRGRKKKPYITNLKRISKPGLRIYSNHREIPKVLGGMGIVILSTSSGIVTDREARQKQIGGEILCYVW.

Belongs to the universal ribosomal protein uS8 family. As to quaternary structure, part of the 30S ribosomal subunit.

It localises to the plastid. Its subcellular location is the chloroplast. In terms of biological role, one of the primary rRNA binding proteins, it binds directly to 16S rRNA central domain where it helps coordinate assembly of the platform of the 30S subunit. The protein is Small ribosomal subunit protein uS8c (rps8) of Angiopteris evecta (Mule's foot fern).